The primary structure comprises 189 residues: Potassium-transporting ATPase KdpC subunit (189 aa).

A helical membrane pass occupies residues 6 to 26 (PAILLFIMFTIICGGIYPALV).

Belongs to the KdpC family. As to quaternary structure, the system is composed of three essential subunits: KdpA, KdpB and KdpC.

The protein resides in the cell inner membrane. In terms of biological role, part of the high-affinity ATP-driven potassium transport (or Kdp) system, which catalyzes the hydrolysis of ATP coupled with the electrogenic transport of potassium into the cytoplasm. This subunit acts as a catalytic chaperone that increases the ATP-binding affinity of the ATP-hydrolyzing subunit KdpB by the formation of a transient KdpB/KdpC/ATP ternary complex. In Trichlorobacter lovleyi (strain ATCC BAA-1151 / DSM 17278 / SZ) (Geobacter lovleyi), this protein is Potassium-transporting ATPase KdpC subunit.